The sequence spans 451 residues: Exodeoxyribonuclease 7 large subunit (451 aa).

Belongs to the XseA family. In terms of assembly, heterooligomer composed of large and small subunits.

It is found in the cytoplasm. It catalyses the reaction Exonucleolytic cleavage in either 5'- to 3'- or 3'- to 5'-direction to yield nucleoside 5'-phosphates.. Bidirectionally degrades single-stranded DNA into large acid-insoluble oligonucleotides, which are then degraded further into small acid-soluble oligonucleotides. This Neisseria meningitidis serogroup A / serotype 4A (strain DSM 15465 / Z2491) protein is Exodeoxyribonuclease 7 large subunit.